The chain runs to 648 residues: S-M checkpoint control protein rad4 (648 aa).

2 consecutive BRCT domains span residues 2 to 92 and 96 to 185; these read GSSK…DDGL and KHFL…YFQL. The short motif at 242-249 is the Nuclear localization signal element; sequence KRGKKRDR. 2 consecutive BRCT domains span residues 298–384 and 392–486; these read NEAK…EHAL and SLVP…SPWA. Residue serine 592 is modified to Phosphoserine. The Nuclear localization signal signature appears at 643–648; sequence RKLRRR.

Interacts with drc1/sld2. Interacts (via BRCT1,2 domains) with crb2; a single rad4 molecule interacts simultaneously with both 'Thr-187' phosphorylation sites in a crb2 dimer.

It localises to the nucleus. In terms of biological role, essential component for DNA replication and also the checkpoint control system which couples S and M phases. May directly or indirectly interact with chromatin proteins to form the complex required for the initiation and/or progression of DNA synthesis. Interacts simultaneously with both 'Thr-187' phosphorylation sites in a crb2 dimer for establishing the DNA checkpoint. This is S-M checkpoint control protein rad4 (rad4) from Schizosaccharomyces pombe (strain 972 / ATCC 24843) (Fission yeast).